A 356-amino-acid chain; its full sequence is Tyrosine recombinase XerS (356 aa).

One can recognise a Core-binding (CB) domain in the interval 16–121 (IMPWYVLEYY…ALSSLYKYLT (106 aa)). Residues 169 to 354 (GFLTYIDQEY…VNDEQKNALD (186 aa)) form the Tyr recombinase domain. Residues R210, K234, H306, R309, and H332 contribute to the active site. Catalysis depends on Y341, which acts as the O-(3'-phospho-DNA)-tyrosine intermediate.

The protein belongs to the 'phage' integrase family. XerS subfamily.

The protein resides in the cytoplasm. With respect to regulation, ftsK is required for recombination. Site-specific tyrosine recombinase, which acts by catalyzing the cutting and rejoining of the recombining DNA molecules. Essential to convert dimers of the bacterial chromosome into monomers to permit their segregation at cell division. The sequence is that of Tyrosine recombinase XerS from Streptococcus pneumoniae (strain Hungary19A-6).